Consider the following 175-residue polypeptide: Succinate dehydrogenase assembly factor 2, mitochondrial (175 aa).

The segment at 42 to 71 (PFSDPELAHANNSLPSNSEEWPLPEPLDRT) is disordered. A compositionally biased stretch (polar residues) spans 51-60 (ANNSLPSNSE).

It belongs to the SDHAF2 family. In terms of assembly, interacts with the flavoprotein subunit within the SDH catalytic dimer.

It is found in the mitochondrion matrix. Functionally, plays an essential role in the assembly of succinate dehydrogenase (SDH), an enzyme complex (also referred to as respiratory complex II) that is a component of both the tricarboxylic acid (TCA) cycle and the mitochondrial electron transport chain, and which couples the oxidation of succinate to fumarate with the reduction of ubiquinone (coenzyme Q) to ubiquinol. Required for flavinylation (covalent attachment of FAD) of the flavoprotein subunit of the SDH catalytic dimer. The sequence is that of Succinate dehydrogenase assembly factor 2, mitochondrial from Cryptococcus neoformans var. neoformans serotype D (strain B-3501A) (Filobasidiella neoformans).